Consider the following 267-residue polypeptide: Diaminopimelate epimerase (267 aa).

Positions 15 and 66 each coordinate substrate. The Proton donor role is filled by Cys-75. Residues 76–77 (GN), Asn-150, Asn-183, and 201–202 (ER) contribute to the substrate site. Catalysis depends on Cys-210, which acts as the Proton acceptor. 211 to 212 (GT) provides a ligand contact to substrate.

This sequence belongs to the diaminopimelate epimerase family. In terms of assembly, homodimer.

Its subcellular location is the cytoplasm. It catalyses the reaction (2S,6S)-2,6-diaminopimelate = meso-2,6-diaminopimelate. The protein operates within amino-acid biosynthesis; L-lysine biosynthesis via DAP pathway; DL-2,6-diaminopimelate from LL-2,6-diaminopimelate: step 1/1. Functionally, catalyzes the stereoinversion of LL-2,6-diaminopimelate (L,L-DAP) to meso-diaminopimelate (meso-DAP), a precursor of L-lysine and an essential component of the bacterial peptidoglycan. This Bacteroides thetaiotaomicron (strain ATCC 29148 / DSM 2079 / JCM 5827 / CCUG 10774 / NCTC 10582 / VPI-5482 / E50) protein is Diaminopimelate epimerase.